Here is a 1084-residue protein sequence, read N- to C-terminus: MNTGGRLIAGSHNRNEFVLINADESARIRSVQELSGQTCQICGDEIELTVSSELFVACNECAFPVCRPCYEYERREGNQACPQCKTRYKRIKGSPRVDGDDEEEEDIDDLEYEFDHGMDPEHAAEAALSSRLNTGRGGLDSAPPGSQIPLLTYCDEDADMYSDRHALIVPPSTGYGNRVYPAPFTDSSAPPQARSMVPQKDIAEYGYGSVAWKDRMEVWKRRQGEKLQVIKHEGGNNGRGSNDDDELDDPDMPMMDEGRQPLSRKLPIRSSRINPYRMLILCRLAILGLFFHYRILHPVNDAYGLWLTSVICEIWFAVSWILDQFPKWYPIERETYLDRLSLRYEKEGKPSGLAPVDVFVSTVDPLKEPPLITANTVLSILAVDYPVDKVACYVSDDGAAMLTFEALSDTAEFARKWVPFCKKFNIEPRAPEWYFSQKMDYLKNKVHPAFVRERRAMKRDYEEFKVKINALVATAQKVPEEGWTMQDGTPWPGNNVRDHPGMIQVFLGHSGVRDTDGNELPRLVYVSREKRPGFDHHKKAGAMNSLIRVSAVLSNAPYLLNVDCDHYINNSKAIRESMCFMMDPQSGKKVCYVQFPQRFDGIDRHDRYSNRNVVFFDINMKGLDGIQGPIYVGTGCVFRRQALYGFDAPKKKKPPGKTCNCWPKWCCLCCGLRKKSKTKAKDKKTNTKETSKQIHALENVDEGVIVPVSNVEKRSEATQLKLEKKFGQSPVFVASAVLQNGGVPRNASPACLLREAIQVISCGYEDKTEWGKEIGWIYGSVTEDILTGFKMHCHGWRSVYCMPKRAAFKGSAPINLSDRLHQVLRWALGSVEIFLSRHCPIWYGYGGGLKWLERFSYINSVVYPWTSLPLIVYCSLPAVCLLTGKFIVPEISNYAGILFMLMFISIAVTGILEMQWGGVGIDDWWRNEQFWVIGGASSHLFALFQGLLKVLAGVNTNFTVTSKAADDGAFSELYIFKWTTLLIPPTTLLIINIIGVIVGVSDAISNGYDSWGPLFGRLFFALWVIVHLYPFLKGMLGKQDKMPTIIVVWSILLASILTLLWVRVNPFVAKGGPVLEICGLNCGN.

M1 bears the N-acetylmethionine mark. Residues 1 to 278 are Cytoplasmic-facing; sequence MNTGGRLIAG…RSSRINPYRM (278 aa). Zn(2+) is bound by residues C39, C42, C58, C61, C66, C69, C81, and C84. The segment at 39–85 adopts an RING-type; degenerate zinc-finger fold; sequence CQICGDEIELTVSSELFVACNECAFPVCRPCYEYERREGNQACPQCK. The interval 230-259 is disordered; the sequence is IKHEGGNNGRGSNDDDELDDPDMPMMDEGR. The chain crosses the membrane as a helical span at residues 279–299; that stretch reads LILCRLAILGLFFHYRILHPV. At 300 to 301 the chain is on the extracellular side; that stretch reads ND. Residues 302–322 form a helical membrane-spanning segment; that stretch reads AYGLWLTSVICEIWFAVSWIL. Topologically, residues 323–867 are cytoplasmic; that stretch reads DQFPKWYPIE…INSVVYPWTS (545 aa). UDP-alpha-D-glucose contacts are provided by S361, K367, E368, and D397. D397 is an active-site residue. A coiled-coil region spans residues 451 to 477; it reads VRERRAMKRDYEEFKVKINALVATAQK. K538 is a UDP-alpha-D-glucose binding site. Mn(2+) is bound by residues K539 and D563. The active site involves D784. A helical transmembrane segment spans residues 868–888; it reads LPLIVYCSLPAVCLLTGKFIV. Residues 889-893 lie on the Extracellular side of the membrane; the sequence is PEISN. Residues 894–914 traverse the membrane as a helical segment; that stretch reads YAGILFMLMFISIAVTGILEM. Topologically, residues 915 to 929 are cytoplasmic; the sequence is QWGGVGIDDWWRNEQ. The helical transmembrane segment at 930–950 threads the bilayer; sequence FWVIGGASSHLFALFQGLLKV. The Extracellular portion of the chain corresponds to 951–979; that stretch reads LAGVNTNFTVTSKAADDGAFSELYIFKWT. Residue N957 is glycosylated (N-linked (GlcNAc...) asparagine). Residues 980–1000 traverse the membrane as a helical segment; sequence TLLIPPTTLLIINIIGVIVGV. Over 1001-1011 the chain is Cytoplasmic; sequence SDAISNGYDSW. Residues 1012–1032 form a helical membrane-spanning segment; the sequence is GPLFGRLFFALWVIVHLYPFL. Topologically, residues 1033–1041 are extracellular; it reads KGMLGKQDK. Residues 1042–1062 form a helical membrane-spanning segment; that stretch reads MPTIIVVWSILLASILTLLWV. Residues 1063–1084 are Cytoplasmic-facing; that stretch reads RVNPFVAKGGPVLEICGLNCGN.

The protein belongs to the glycosyltransferase 2 family. Plant cellulose synthase subfamily. Homodimer. Interaction through zinc finger domain. Mn(2+) is required as a cofactor. It depends on Zn(2+) as a cofactor. Strongly and ubiquitously expressed. Localized in some dividing and expanding cells, as well as in vascular tissues.

It is found in the cell membrane. It catalyses the reaction [(1-&gt;4)-beta-D-glucosyl](n) + UDP-alpha-D-glucose = [(1-&gt;4)-beta-D-glucosyl](n+1) + UDP + H(+). It participates in glycan metabolism; plant cellulose biosynthesis. In terms of biological role, catalytic subunit of cellulose synthase terminal complexes ('rosettes'), required for beta-1,4-glucan microfibril crystallization, a major mechanism of the cell wall formation. Involved in the primary cell wall formation. The chain is Cellulose synthase A catalytic subunit 2 [UDP-forming] from Arabidopsis thaliana (Mouse-ear cress).